Consider the following 1049-residue polypeptide: Self-sufficient cytochrome P450 monooxygenase CYP505E4 (1049 aa).

Cys405 is a heme binding site. The disordered stretch occupies residues 462–492 (ATALSQHNMSAGATSSPGSSAHPAGNKNAQD). A compositionally biased stretch (low complexity) spans 471–486 (SAGATSSPGSSAHPAG). Positions 499-640 (ISFFYGSNSG…DLEVWEETNL (142 aa)) constitute a Flavodoxin-like domain. FMN contacts are provided by residues 505–509 (SNSGT) and 584–616 (VFGC…TRLT). Residues 678–906 (RDLIEGKVTA…RPAKEAFHLP (229 aa)) enclose the FAD-binding FR-type domain.

The protein in the N-terminal section; belongs to the cytochrome P450 family. FAD is required as a cofactor. FMN serves as cofactor. Requires heme as cofactor.

The enzyme catalyses 2 oxidized [cytochrome P450] + NADPH = 2 reduced [cytochrome P450] + NADP(+) + H(+). The catalysed reaction is an organic molecule + reduced [NADPH--hemoprotein reductase] + O2 = an alcohol + oxidized [NADPH--hemoprotein reductase] + H2O + H(+). It carries out the reaction dodecanoate + reduced [NADPH--hemoprotein reductase] + O2 = 5-hydroxydodecanoate + oxidized [NADPH--hemoprotein reductase] + H2O + H(+). It catalyses the reaction tetradecanoate + reduced [NADPH--hemoprotein reductase] + O2 = 7-hydroxytetradecanoate + oxidized [NADPH--hemoprotein reductase] + H2O + H(+). The enzyme catalyses dodecan-1-ol + reduced [NADPH--hemoprotein reductase] + O2 = 1,5-dodecanediol + oxidized [NADPH--hemoprotein reductase] + H2O + H(+). The catalysed reaction is dodecan-1-ol + reduced [NADPH--hemoprotein reductase] + O2 = 1,4-dodecanediol + oxidized [NADPH--hemoprotein reductase] + H2O + H(+). It carries out the reaction dodecan-1-ol + reduced [NADPH--hemoprotein reductase] + O2 = 1,6-dodecanediol + oxidized [NADPH--hemoprotein reductase] + H2O + H(+). Its function is as follows. Self-sufficient cytochrome P450 monooxygenase that catalyzes the regioselective in-chain hydroxylation of alkanes, fatty alcohols, and fatty acids at the omega-7 position. Performs hydroxylation of C10-C16 n-alkanes and C12 and C14 fatty alcohols; and thereby enables the one step biocatalytic synthesis of rare alcohols such as 5-dodecanol and 7-tetradecanol. Converts 1-dodecanol into 1,5-dodecanediol as major product with very little sub-terminally hydroxylated products with the 1,4-dodecanediol and 1,6-dodecanediol more abundant. Converts dodecanoic acid to 5-hydroxydodecanoic acid which can be further converted into delta-dodecalactone by lactonization of the 5-hydroxy acid at low pH. Also gives sub-terminal hydroxylation of dodecanoic acid with 9-hydroxydodecanoic acid being the second most abundant product. This is Self-sufficient cytochrome P450 monooxygenase CYP505E4 from Penicillium freii.